A 360-amino-acid chain; its full sequence is DNA replication and repair protein RecF (360 aa).

30–37 (GQNGSGKT) is an ATP binding site.

It belongs to the RecF family.

Its subcellular location is the cytoplasm. The RecF protein is involved in DNA metabolism; it is required for DNA replication and normal SOS inducibility. RecF binds preferentially to single-stranded, linear DNA. It also seems to bind ATP. This Shewanella baltica (strain OS223) protein is DNA replication and repair protein RecF.